A 52-amino-acid polypeptide reads, in one-letter code: uncharacterized protein (52 aa).

Residues 1–52 are disordered; it reads MFGFIYRDPSPAPQGKIRDGSKDPKTPGGGGGGGGGISPNGGAPLGGKGFSM. A compositionally biased stretch (basic and acidic residues) spans 16–25; it reads KIRDGSKDPK. The span at 27-52 shows a compositional bias: gly residues; it reads PGGGGGGGGGISPNGGAPLGGKGFSM.

This is an uncharacterized protein from Dictyostelium discoideum (Social amoeba).